The primary structure comprises 421 residues: Putative transporter AmpG 3 (421 aa).

12 helical membrane-spanning segments follow: residues 6–26 (YLIG…LIFF), 41–61 (IIGA…WSPF), 80–100 (WALV…KRSP), 104–124 (LCIT…QDIV), 139–159 (LSIV…LGSV), 166–186 (IIFG…VGPI), 230–250 (LLLI…PMAM), 274–294 (LLIM…IGIF), 297–317 (VLIG…LATI), 324–344 (FIIT…IISI), 360–380 (AISA…GGIC), and 388–408 (VFFL…YTIY).

The protein belongs to the major facilitator superfamily.

The protein resides in the cell inner membrane. The chain is Putative transporter AmpG 3 (ampG3) from Rickettsia prowazekii (strain Madrid E).